Consider the following 1190-residue polypeptide: Laminin subunit gamma-2 (1190 aa).

The signal sequence occupies residues 1–21 (MPALWLRCGLCLALLLPAARA). 12 disulfides stabilise this stretch: C28–C37, C30–C53, C56–C65, C68–C81, C84–C96, C86–C102, C104–C113, C116–C128, C139–C150, C141–C155, C157–C166, and C169–C184. Laminin EGF-like domains lie at 28–83 (CDCN…RCLP), 84–130 (CNCN…GCAQ), and 139–186 (CDCD…GCTQ). Residues 187–196 (CFCYGHSASC) form the Laminin EGF-like 4; first part domain. The Laminin IV type A domain occupies 213–381 (QDVDGWKAVQ…SGAPAPWVEQ (169 aa)). Residues N342 and N362 are each glycosylated (N-linked (GlcNAc...) asparagine). A Laminin EGF-like 4; second part domain is found at 382–415 (CVCPVGYKGQFCQDCASGYKRDSARLGPFGTCIP). Laminin EGF-like domains lie at 416–462 (CNCQ…SCKP), 463–517 (CPCR…PCQP), and 518–573 (CQCN…KCRA). Cystine bridges form between C463–C471, C465–C482, C485–C494, C497–C515, C518–C532, C520–C539, C542–C551, C554–C571, C574–C586, C576–C592, and C594–C603. The 30-residue stretch at 574 to 603 (CNCNPVGSEPVECRSDGSCVCKPGFGGLSC) folds into the Laminin EGF-like 8; truncated domain. The tract at residues 604–1190 (EHAALTSCPA…CYNTQALEQQ (587 aa)) is domain II and I. Positions 613–718 (ACYNQVKVQM…GSQYQNQVQD (106 aa)) form a coiled coil. The O-linked (Xyl...) (chondroitin sulfate) serine glycan is linked to S803. Coiled-coil stretches lie at residues 809–1073 (AVVQ…AVQM) and 1114–1190 (EERL…LEQQ). Residues N939 and N1030 are each glycosylated (N-linked (GlcNAc...) asparagine).

As to quaternary structure, laminin is a complex glycoprotein, consisting of three different polypeptide chains (alpha, beta, gamma), which are bound to each other by disulfide bonds into a cross-shaped molecule comprising one long and three short arms with globules at each end. Gamma-2 is a subunit of laminin-5 (laminin-332 or epiligrin/kalinin/nicein). In terms of processing, O-glycosylated; contains chondroitin sulfate (CS).

It is found in the secreted. The protein resides in the extracellular space. Its subcellular location is the extracellular matrix. The protein localises to the basement membrane. Its function is as follows. Binding to cells via a high affinity receptor, laminin is thought to mediate the attachment, migration and organization of cells into tissues during embryonic development by interacting with other extracellular matrix components. Ladsin exerts cell-scattering activity toward a wide variety of cells, including epithelial, endothelial, and fibroblastic cells. The chain is Laminin subunit gamma-2 (LAMC2) from Equus caballus (Horse).